A 240-amino-acid chain; its full sequence is Uridylate kinase (240 aa).

13-16 (KASG) provides a ligand contact to ATP. Residues 21–26 (GSQGFG) are involved in allosteric activation by GTP. Glycine 55 contacts UMP. The ATP site is built by glycine 56 and arginine 60. Residues aspartate 75 and 136-143 (TGNPFFTT) each bind UMP. Residues threonine 163, glutamine 164, tyrosine 169, and aspartate 172 each contribute to the ATP site.

This sequence belongs to the UMP kinase family. Homohexamer.

The protein resides in the cytoplasm. The catalysed reaction is UMP + ATP = UDP + ADP. The protein operates within pyrimidine metabolism; CTP biosynthesis via de novo pathway; UDP from UMP (UMPK route): step 1/1. Allosterically activated by GTP. Inhibited by UTP. Functionally, catalyzes the reversible phosphorylation of UMP to UDP. This Brucella abortus biovar 1 (strain 9-941) protein is Uridylate kinase.